Reading from the N-terminus, the 575-residue chain is Acyloxyacyl hydrolase (575 aa).

An N-terminal signal peptide occupies residues 1–23; the sequence is MQSPWKILTVAPLFLLLSLQSSA. Positions 24–34 are excised as a propeptide; it reads SPANDDQSRPS. Residues 37 to 118 enclose the Saposin B-type domain; sequence NGHTCVGCVL…HTLEFCKQNT (82 aa). Residues 38 to 70 are important for enzyme activity, localization to cytoplasmic vesicles, and protein stability; sequence GHTCVGCVLVVSVIEQLAQVHNSTVQASMERLC. Intrachain disulfides connect C41–C114, C44–C108, C70–C83, C123–C453, C160–C169, C206–C230, C249–C329, and C376–C459. N59 carries N-linked (GlcNAc...) asparagine glycosylation. The segment at 173-177 is lipopolysaccharide binding; sequence KLAME. Ca(2+) is bound by residues D184, D186, D188, Y190, D205, N207, D208, D210, V213, D223, D227, N229, N231, I233, and E245. Residue N207 is glycosylated (N-linked (GlcNAc...) asparagine). S263 is an active-site residue. N-linked (GlcNAc...) asparagine glycosylation is found at N409 and N466.

Heterodimer of the large and small subunits; disulfide-linked. Requires Ca(2+) as cofactor. In terms of processing, cleaved into a large and a small subunit. Post-translationally, the small subunit is N-glycosylated.

The protein resides in the secreted. Its subcellular location is the cytoplasmic vesicle. The enzyme catalyses a 3-(acyloxy)acyl derivative of bacterial toxin + H2O = a 3-hydroxyacyl derivative of bacterial toxin + a fatty acid + H(+). Inhibited by EDTA. In terms of biological role, removes the secondary (acyloxyacyl-linked) fatty acyl chains from the lipid A region of bacterial lipopolysaccharides. By breaking down LPS, terminates the host response to bacterial infection and prevents prolonged and damaging inflammatory responses. In peritoneal macrophages, seems to be important for recovery from a state of immune tolerance following infection by Gram-negative bacteria. This chain is Acyloxyacyl hydrolase, found in Homo sapiens (Human).